A 141-amino-acid polypeptide reads, in one-letter code: Large ribosomal subunit protein uL11 (141 aa).

Belongs to the universal ribosomal protein uL11 family. As to quaternary structure, part of the ribosomal stalk of the 50S ribosomal subunit. Interacts with L10 and the large rRNA to form the base of the stalk. L10 forms an elongated spine to which L12 dimers bind in a sequential fashion forming a multimeric L10(L12)X complex. In terms of processing, one or more lysine residues are methylated.

Its function is as follows. Forms part of the ribosomal stalk which helps the ribosome interact with GTP-bound translation factors. The chain is Large ribosomal subunit protein uL11 from Chlamydia abortus (strain DSM 27085 / S26/3) (Chlamydophila abortus).